Consider the following 1141-residue polypeptide: MRRRDVAFCLLLLPAFMTQAVYGQRKKGPKPNTLARKNDFQDAICFIDVVFILDSSESSKIVLFDNQKDFVDSLSEKIFQLTPGRSLKYDIKLAALQFSSSVQIDPPLSSWKDLRTFKQRVKSLNLIGQGTFSYYAISNATRLLKREGRKDGVKVALLMTDGIDHPKSPDVQSISEDARILGISFITVGLSTVVNEAKLRLISGDPSNEPVLLLSDPTLVDRIQERLGVLFERKCEHKICECEKGEPGDPGPPGTHGNPGIKGERGPKGNPGDAQKGETGERGPVGIPGYKGDKGERGECGKPGMKGDKGPEGPYGPKGPRGIQGIGGPPGDPGPKGFQGNKGEPGPPGPYGPPGAPGIGQQGVKGERGQEGRMGAPGPIGIGEPGQPGPRGPEGAPGERGLPGEGFPGPKGEKGSEGPIGPQGLQGLSIKGDKGDLGPVGPQGPAGIPGIGSQGEQGIQGPSGPPGPQGPPGQGSPGPKGEVGQMGPTGPRGPMGIGVQGPKGEPGTVGLPGQPGVPGEDGASGKKGEAGLPGTRGPEGMPGKGQPGPKGDEGKKGSKGNQGQRGFPGPEGPKGEPGVMGPFGMPGASIPGPSGPKGDRGGPGMPGLKGEPGLPVRGPKGAQGPRGPVGAPGLKGDGYPGVAGPRGLPGPPGPMGLRGVGDTGAKGEPGVRGPPGPSGPRGIGTQGPKGDTGQKGLPGPPGPPGYGSQGIKGEQGPQGFPGSKGTVGLGLPGQKGEHGDRGDVGRKGEKGETGEPGSPGKQGLQGPKGDLGLTKEEIIKLIIEICGCGPKCKETPLELVFVIDSSESVGPENFQIIQSFVKTLADRVALDLGTARIGIINYSHKVEKVASLKQFSSKDDFKLVVDNMQYLGEGTYTATALQAANDMFKEARPGVKKVALVITDGQTDSRDKKKLADVVKDANDSNVEIFVIGVVKKDDPNFEIFHKEMNLIATDAEHVYQFDDFFTLQDTLKQKLSKKICEDFDSYLIQVFGSPSFQPEFGVSEREVSVSTPKPAKEMSKSFNVSRGQNEETESYVLTEAGILAIPTPPEATNTLEPLLSSREGVETRTPNPNLLQSEKSLYKDPRCEEALKPGECGDYVVRWYYDKQVNSCARFWFSGCNGSGNRFHSEKECRETCIKQ.

The signal sequence occupies residues methionine 1 to alanine 20. One can recognise a VWFA 1 domain in the interval aspartate 48–leucine 227. A disordered region spans residues cysteine 242–aspartate 770. 5 Collagen-like domains span residues glutamate 243–cysteine 300, glycine 301–glycine 358, glycine 501–lysine 544, glycine 545–alanine 588, and glycine 733–glycine 769. Basic and acidic residues predominate over residues lysine 291 to proline 311. The segment covering proline 335 to glutamate 344 has biased composition (low complexity). Pro residues predominate over residues proline 345–alanine 356. Residues lysine 735 to threonine 753 show a composition bias toward basic and acidic residues. In terms of domain architecture, VWFA 2 spans glutamate 798–leucine 976. One can recognise a BPTI/Kunitz inhibitor domain in the interval cysteine 1088 to cysteine 1138. Disulfide bonds link cysteine 1088-cysteine 1138, cysteine 1097-cysteine 1121, and cysteine 1113-cysteine 1134.

It belongs to the VWA-containing collagen family. In terms of assembly, trimer or homomer. Secreted into as a 135 kDa monomer under reducing conditions and as a homotrimer under non-reducing conditions. Expressed in skin, intestine, sternum, brain and kidney. Lower expression is also observed in heart, lung, sciatic nerve, dorsal root ganglia, peripheral nerves and calvaria of newborn mice and in intestine and brain of adult mice. Found in basement membrane surrounding a particular subset of Schwann cells in adult sciatic nerve.

It localises to the secreted. The protein localises to the extracellular space. The protein resides in the extracellular matrix. Its subcellular location is the basement membrane. Its function is as follows. May act as a cell-binding protein. The chain is Collagen alpha-1(XXVIII) chain (Col28a1) from Mus musculus (Mouse).